The chain runs to 431 residues: Adenylosuccinate lyase (431 aa).

N(6)-(1,2-dicarboxyethyl)-AMP is bound by residues 4–5 (RY), 67–69 (RHD), and 93–94 (TS). Histidine 141 serves as the catalytic Proton donor/acceptor. Residue glutamine 212 coordinates N(6)-(1,2-dicarboxyethyl)-AMP. Serine 262 functions as the Proton donor/acceptor in the catalytic mechanism. Residues serine 263, 268–270 (KRN), and 307–311 (SVERV) contribute to the N(6)-(1,2-dicarboxyethyl)-AMP site.

This sequence belongs to the lyase 1 family. Adenylosuccinate lyase subfamily. In terms of assembly, homooligomer. Residues from neighboring subunits contribute catalytic and substrate-binding residues to each active site.

The catalysed reaction is N(6)-(1,2-dicarboxyethyl)-AMP = fumarate + AMP. The enzyme catalyses (2S)-2-[5-amino-1-(5-phospho-beta-D-ribosyl)imidazole-4-carboxamido]succinate = 5-amino-1-(5-phospho-beta-D-ribosyl)imidazole-4-carboxamide + fumarate. Its pathway is purine metabolism; AMP biosynthesis via de novo pathway; AMP from IMP: step 2/2. It participates in purine metabolism; IMP biosynthesis via de novo pathway; 5-amino-1-(5-phospho-D-ribosyl)imidazole-4-carboxamide from 5-amino-1-(5-phospho-D-ribosyl)imidazole-4-carboxylate: step 2/2. Catalyzes two reactions in de novo purine nucleotide biosynthesis. Catalyzes the breakdown of 5-aminoimidazole- (N-succinylocarboxamide) ribotide (SAICAR or 2-[5-amino-1-(5-phospho-beta-D-ribosyl)imidazole-4-carboxamido]succinate) to 5-aminoimidazole-4-carboxamide ribotide (AICAR or 5-amino-1-(5-phospho-beta-D-ribosyl)imidazole-4-carboxamide) and fumarate, and of adenylosuccinate (ADS or N(6)-(1,2-dicarboxyethyl)-AMP) to adenosine monophosphate (AMP) and fumarate. This Synechocystis sp. (strain ATCC 27184 / PCC 6803 / Kazusa) protein is Adenylosuccinate lyase (purB).